The sequence spans 239 residues: Orotidine 5'-phosphate decarboxylase (239 aa).

Residues D10, K33, 60-69 (DLKLYDIPNT), T124, R186, Q195, G215, and R216 each bind substrate. Catalysis depends on K62, which acts as the Proton donor.

The protein belongs to the OMP decarboxylase family. Type 1 subfamily. Homodimer.

It carries out the reaction orotidine 5'-phosphate + H(+) = UMP + CO2. Its pathway is pyrimidine metabolism; UMP biosynthesis via de novo pathway; UMP from orotate: step 2/2. In terms of biological role, catalyzes the decarboxylation of orotidine 5'-monophosphate (OMP) to uridine 5'-monophosphate (UMP). The sequence is that of Orotidine 5'-phosphate decarboxylase from Latilactobacillus sakei subsp. sakei (strain 23K) (Lactobacillus sakei subsp. sakei).